Here is a 339-residue protein sequence, read N- to C-terminus: Holliday junction branch migration complex subunit RuvB (339 aa).

A large ATPase domain (RuvB-L) region spans residues 2–187 (KDVNEEERII…FGIIEHMQYY (186 aa)). ATP contacts are provided by residues L26, R27, G68, K71, T72, T73, 134 to 136 (EDF), R177, Y187, and R224. T72 provides a ligand contact to Mg(2+). Residues 188 to 258 (SVEDLEKIIQ…TTKHSLHLLE (71 aa)) form a small ATPAse domain (RuvB-S) region. Residues 261-339 (DEGLDQTDRK…QLGYPPKDEK (79 aa)) are head domain (RuvB-H). DNA contacts are provided by R316 and R321.

Belongs to the RuvB family. Homohexamer. Forms an RuvA(8)-RuvB(12)-Holliday junction (HJ) complex. HJ DNA is sandwiched between 2 RuvA tetramers; dsDNA enters through RuvA and exits via RuvB. An RuvB hexamer assembles on each DNA strand where it exits the tetramer. Each RuvB hexamer is contacted by two RuvA subunits (via domain III) on 2 adjacent RuvB subunits; this complex drives branch migration. In the full resolvosome a probable DNA-RuvA(4)-RuvB(12)-RuvC(2) complex forms which resolves the HJ.

The protein resides in the cytoplasm. It carries out the reaction ATP + H2O = ADP + phosphate + H(+). Functionally, the RuvA-RuvB-RuvC complex processes Holliday junction (HJ) DNA during genetic recombination and DNA repair, while the RuvA-RuvB complex plays an important role in the rescue of blocked DNA replication forks via replication fork reversal (RFR). RuvA specifically binds to HJ cruciform DNA, conferring on it an open structure. The RuvB hexamer acts as an ATP-dependent pump, pulling dsDNA into and through the RuvAB complex. RuvB forms 2 homohexamers on either side of HJ DNA bound by 1 or 2 RuvA tetramers; 4 subunits per hexamer contact DNA at a time. Coordinated motions by a converter formed by DNA-disengaged RuvB subunits stimulates ATP hydrolysis and nucleotide exchange. Immobilization of the converter enables RuvB to convert the ATP-contained energy into a lever motion, pulling 2 nucleotides of DNA out of the RuvA tetramer per ATP hydrolyzed, thus driving DNA branch migration. The RuvB motors rotate together with the DNA substrate, which together with the progressing nucleotide cycle form the mechanistic basis for DNA recombination by continuous HJ branch migration. Branch migration allows RuvC to scan DNA until it finds its consensus sequence, where it cleaves and resolves cruciform DNA. This Lactobacillus johnsonii (strain CNCM I-12250 / La1 / NCC 533) protein is Holliday junction branch migration complex subunit RuvB.